The chain runs to 544 residues: CRISPR-associated endodeoxyribonuclease Cas12f2 (544 aa).

The recognition domain (REC) stretch occupies residues 1-195 (MNMSKTTISV…KPNERETRYV (195 aa)). Positions 196–326 (HISKLESPSK…YLQYTYEAEV (131 aa)) are wedge domain (WED). Positions 327–334 (EANKEYAG) are linker. The ruvC-I stretch occupies residues 335–485 (CLGVDIGCSK…VYVKPDYTSQ (151 aa)). Active-site residues include Asp-339 and Glu-430. Residues 486–520 (TCSSCGADKEKTERPSQAIFRCLNPTCRYYQRDIN) form a target nucleic acid-binding (TNB) region. Cys-487, Cys-490, Cys-507, and Cys-512 together coordinate Zn(2+). A ruvC-II region spans residues 521 to 541 (ADFNAAVNIAKKALNNTEVVT). The active site involves Asp-522.

The protein belongs to the CRISPR-associated endonuclease Cas12f family. As to quaternary structure, an asymmetric homodimer. Guide RNA is probably required for dimerization. The cofactor is Mg(2+). Zn(2+) serves as cofactor.

Its function is as follows. CRISPR (clustered regularly interspaced short palindromic repeat), is an adaptive immune system that provides protection against mobile genetic elements (viruses, transposable elements and conjugative plasmids). CRISPR clusters contain sequences complementary to antecedent mobile elements and target invading nucleic acids. CRISPR clusters are transcribed and processed into CRISPR RNA (crRNA), which requires a trans-encoded small RNA (tracrRNA), but not this protein (in vitro). Recognizes a short motif in the CRISPR repeat sequences (the 5' PAM or protospacer adjacent motif, TTAT in this organism) to help distinguish self versus nonself, as targets within the CRISPR locus do not have PAMs. Upon expression in E.coli of this protein, a mini CRISPR array and the probable tracrRNA, has dsDNA endonuclease activity. DNA cleavage is centered around positions 21 base pairs 3' of PAM. The mini system does not protect E.coli against transformation by foreign plasmids. This is CRISPR-associated endodeoxyribonuclease Cas12f2 from Micrarchaeota archaeon (strain CG1_02_47_40).